The chain runs to 347 residues: Autoinducer 2 import system permease protein LsrC (347 aa).

9 consecutive transmembrane segments (helical) span residues 14-34 (LLAIVCLFVFPGALDSQYLSV), 39-59 (MVFSSAQILMLLAIGATMVML), 72-92 (GMCAVLLGVMLNAGYSLPVAC), 93-113 (LATLILGIVAGFFNGVLVAWL), 115-135 (IPAIVATLGTLGLYRGIMLLW), 155-175 (VFLGISAIGWFTLVLALLMAW), 213-233 (LNGGMAALAGIVFTSQIGFIP), 249-269 (VLGGISLLGGSGTVIGAILGA), and 284-304 (IPAWWNDFIAGLVLLGVLVFD).

The protein belongs to the binding-protein-dependent transport system permease family. AraH/RbsC subfamily. As to quaternary structure, the complex is composed of two ATP-binding proteins (LsrA), two transmembrane proteins (LsrC and LsrD) and a solute-binding protein (LsrB).

Its subcellular location is the cell inner membrane. Functionally, part of the ABC transporter complex LsrABCD involved in autoinducer 2 (AI-2) import. Probably responsible for the translocation of the substrate across the membrane. This Salmonella choleraesuis (strain SC-B67) protein is Autoinducer 2 import system permease protein LsrC (lsrC).